The primary structure comprises 478 residues: Histidine--tRNA ligase (478 aa).

The protein belongs to the class-II aminoacyl-tRNA synthetase family. Homodimer.

It is found in the cytoplasm. The catalysed reaction is tRNA(His) + L-histidine + ATP = L-histidyl-tRNA(His) + AMP + diphosphate + H(+). The polypeptide is Histidine--tRNA ligase (hisS) (Xanthomonas axonopodis pv. citri (strain 306)).